We begin with the raw amino-acid sequence, 303 residues long: Probable 5-dehydro-4-deoxyglucarate dehydratase (303 aa).

The protein belongs to the DapA family.

It carries out the reaction 5-dehydro-4-deoxy-D-glucarate + H(+) = 2,5-dioxopentanoate + CO2 + H2O. Its pathway is carbohydrate acid metabolism; D-glucarate degradation; 2,5-dioxopentanoate from D-glucarate: step 2/2. This Pseudomonas savastanoi pv. phaseolicola (strain 1448A / Race 6) (Pseudomonas syringae pv. phaseolicola (strain 1448A / Race 6)) protein is Probable 5-dehydro-4-deoxyglucarate dehydratase.